An 85-amino-acid polypeptide reads, in one-letter code: Small ribosomal subunit protein bS16 (85 aa).

The protein belongs to the bacterial ribosomal protein bS16 family.

The chain is Small ribosomal subunit protein bS16 from Neorickettsia sennetsu (strain ATCC VR-367 / Miyayama) (Ehrlichia sennetsu).